The primary structure comprises 394 residues: Dual-specificity RNA methyltransferase RlmN (394 aa).

E115 (proton acceptor) is an active-site residue. The region spanning 121–360 (EADRATLCVS…VIVRKTRGDD (240 aa)) is the Radical SAM core domain. C128 and C365 are disulfide-bonded. C135, C139, and C142 together coordinate [4Fe-4S] cluster. Residues 189 to 190 (GE), S221, 243 to 245 (SLH), and N322 contribute to the S-adenosyl-L-methionine site. Catalysis depends on C365, which acts as the S-methylcysteine intermediate.

The protein belongs to the radical SAM superfamily. RlmN family. [4Fe-4S] cluster serves as cofactor.

It localises to the cytoplasm. It carries out the reaction adenosine(2503) in 23S rRNA + 2 reduced [2Fe-2S]-[ferredoxin] + 2 S-adenosyl-L-methionine = 2-methyladenosine(2503) in 23S rRNA + 5'-deoxyadenosine + L-methionine + 2 oxidized [2Fe-2S]-[ferredoxin] + S-adenosyl-L-homocysteine. It catalyses the reaction adenosine(37) in tRNA + 2 reduced [2Fe-2S]-[ferredoxin] + 2 S-adenosyl-L-methionine = 2-methyladenosine(37) in tRNA + 5'-deoxyadenosine + L-methionine + 2 oxidized [2Fe-2S]-[ferredoxin] + S-adenosyl-L-homocysteine. Specifically methylates position 2 of adenine 2503 in 23S rRNA and position 2 of adenine 37 in tRNAs. m2A2503 modification seems to play a crucial role in the proofreading step occurring at the peptidyl transferase center and thus would serve to optimize ribosomal fidelity. This Pasteurella multocida (strain Pm70) protein is Dual-specificity RNA methyltransferase RlmN.